The chain runs to 266 residues: Lipooligosaccharide biosynthesis protein lic2B (266 aa).

Belongs to the glycosyltransferase 25 family.

Its function is as follows. Involved in extracellular lipooligosaccharide (LOS) biosynthesis and virulence expression. Involved in the synthesis of the oligosaccharide moiety of the LOS molecule by adding GalNAc. The polypeptide is Lipooligosaccharide biosynthesis protein lic2B (lic2B) (Haemophilus influenzae).